A 1453-amino-acid chain; its full sequence is Leucine-rich repeat-containing protein 9 (1453 aa).

7 LRR repeats span residues F53 to L78, C97 to L119, I120 to L141, K142 to N164, Q166 to R188, L224 to K248, and K264 to L287. Residues L302 to P321 are disordered. LRR repeat units follow at residues L344–I367, K671–Y693, S694–L715, T716–L737, N739–G758, L759–K784, T786–R812, Y886–L908, E909–C930, I931–M952, T953–N975, M976–L1001, L1023–I1048, F1092–Q1115, F1116–L1138, P1139–Q1161, M1201–R1224, L1225–L1247, V1248–K1270, S1272–S1292, L1293–V1317, S1319–L1345, and E1365–G1388.

This chain is Leucine-rich repeat-containing protein 9 (LRRC9), found in Homo sapiens (Human).